Reading from the N-terminus, the 197-residue chain is Holliday junction branch migration complex subunit RuvA (197 aa).

Residues 1 to 64 (MIGRLSGKLI…EDAHLLYGFA (64 aa)) are domain I. A domain II region spans residues 65 to 143 (SKEERQTFRQ…TGGNLTVPGG (79 aa)). The segment at 143 to 147 (GLPFA) is flexible linker. Residues 148–197 (ATPDEKSDIVNALLALGYNEKEAAAATKSLPADVTVSEGVRLALKSLMKV) are domain III.

It belongs to the RuvA family. Homotetramer. Forms an RuvA(8)-RuvB(12)-Holliday junction (HJ) complex. HJ DNA is sandwiched between 2 RuvA tetramers; dsDNA enters through RuvA and exits via RuvB. An RuvB hexamer assembles on each DNA strand where it exits the tetramer. Each RuvB hexamer is contacted by two RuvA subunits (via domain III) on 2 adjacent RuvB subunits; this complex drives branch migration. In the full resolvosome a probable DNA-RuvA(4)-RuvB(12)-RuvC(2) complex forms which resolves the HJ.

The protein localises to the cytoplasm. The RuvA-RuvB-RuvC complex processes Holliday junction (HJ) DNA during genetic recombination and DNA repair, while the RuvA-RuvB complex plays an important role in the rescue of blocked DNA replication forks via replication fork reversal (RFR). RuvA specifically binds to HJ cruciform DNA, conferring on it an open structure. The RuvB hexamer acts as an ATP-dependent pump, pulling dsDNA into and through the RuvAB complex. HJ branch migration allows RuvC to scan DNA until it finds its consensus sequence, where it cleaves and resolves the cruciform DNA. This chain is Holliday junction branch migration complex subunit RuvA, found in Chromobacterium violaceum (strain ATCC 12472 / DSM 30191 / JCM 1249 / CCUG 213 / NBRC 12614 / NCIMB 9131 / NCTC 9757 / MK).